The following is a 262-amino-acid chain: MALPTFSMRQLIEAGCHFGHNTRRWNPKMAPYLYGQRDNVHIIDLQQTVPMLYRAMQAVRDVTAGGGRVLFVGTKRQAQDVVAEHARRCGQYYVNHRWLGGMLTNWKTISHSIKRLRDLEERFGGGDLLGLTKKEQLNLGREKDKLDMALGGIKEMGGLPDMLFIIDTVKESLAVNEANKLGLPVVAVIDSNSDPRGITYPIPGNDDAIRAIQTYCELISGAAIDGIQAQLGAAGVDVGAAEIVPAETLAAEAPAAEQQPTA.

This sequence belongs to the universal ribosomal protein uS2 family.

The polypeptide is Small ribosomal subunit protein uS2 (Rhodospirillum rubrum (strain ATCC 11170 / ATH 1.1.1 / DSM 467 / LMG 4362 / NCIMB 8255 / S1)).